The following is a 692-amino-acid chain: Vacuolar amino acid transporter 3 (692 aa).

Positions 1–14 are enriched in polar residues; that stretch reads MNGKEVSSGSGRTQ. The disordered stretch occupies residues 1-71; that stretch reads MNGKEVSSGS…TGGLLKKPPL (71 aa). Positions 15–24 are enriched in low complexity; the sequence is SNNNKKNNNG. Polar residues predominate over residues 28–38; it reads GISHASGSPLT. Phosphoserine occurs at positions 59, 119, and 121. 2 disordered regions span residues 135–170 and 258–294; these read KWTN…SNRK and DLSE…GRHP. The segment covering 141–153 has biased composition (low complexity); sequence PSSPSQYQYPSQP. Residues 154–167 show a composition bias toward polar residues; the sequence is ALSTSIPSQAPSFS. Ser-165 is modified (phosphoserine). Residues 258-279 show a composition bias toward acidic residues; the sequence is DLSEEEEEEEETEEEPEEEALE. Helical transmembrane passes span 302–322, 329–349, 374–394, 412–432, 443–463, 483–503, 519–539, 561–581, 607–627, 630–650, and 665–685; these read AVLL…PKAF, FSAL…VSLI, FAIL…YTVF, GSIS…PLSL, ALIA…YSIY, WSLF…LIPI, AVMC…YAAF, VQLL…FPAI, YFRC…ANDL, FVSL…PPLL, and LLLD…TSWQ.

This sequence belongs to the amino acid/polyamine transporter 2 family.

Its subcellular location is the vacuole membrane. Functionally, involved in amino acid efflux from the vacuole to the cytoplasm. Capable of transporting large neutral amino acids including tyrosine, glutamine, asparagine, isoleucine and leucine. The protein is Vacuolar amino acid transporter 3 (AVT3) of Saccharomyces cerevisiae (strain ATCC 204508 / S288c) (Baker's yeast).